The sequence spans 260 residues: MRVYRMLRSRVIPVLLMREKGLVKTVKFKEGKYVGDPLNAVKIFNEQEADELTLLDIDASRLGHEPDYVLIERIASECRMPLCYGGGIKTVEQAERILKLGVEKVSLSSAVFENPKIITQLAERVGRQSIVVCLDVKKRLFGSKFDCFTINGTKKQSVDTIEFVKQIQTLGAGEIVLNFIDNDGVMKGYDLDAVSKFKALVKVPLTVVGGAGCVDDIAKLVQQEKLVGAAAGSLFVFKGKYKAVLINYPSPSEKKKALEL.

The active site involves Asp-135.

It belongs to the HisA/HisF family. In terms of assembly, heterodimer of HisH and HisF.

Its subcellular location is the cytoplasm. The catalysed reaction is 5-[(5-phospho-1-deoxy-D-ribulos-1-ylimino)methylamino]-1-(5-phospho-beta-D-ribosyl)imidazole-4-carboxamide + L-glutamine = D-erythro-1-(imidazol-4-yl)glycerol 3-phosphate + 5-amino-1-(5-phospho-beta-D-ribosyl)imidazole-4-carboxamide + L-glutamate + H(+). It participates in amino-acid biosynthesis; L-histidine biosynthesis; L-histidine from 5-phospho-alpha-D-ribose 1-diphosphate: step 5/9. Functionally, IGPS catalyzes the conversion of PRFAR and glutamine to IGP, AICAR and glutamate. The HisF subunit catalyzes the cyclization activity that produces IGP and AICAR from PRFAR using the ammonia provided by the HisH subunit. This chain is Putative imidazole glycerol phosphate synthase subunit hisF3 (hisF3), found in Vibrio vulnificus (strain YJ016).